A 486-amino-acid chain; its full sequence is GTPase Obg (486 aa).

In terms of domain architecture, Obg spans 2–159; sequence SRFIDRVVLH…RELVLELKSV (158 aa). An OBG-type G domain is found at 160-340; the sequence is ADVGLVGFPS…LTFALAKLVA (181 aa). Residues 166 to 173, 191 to 195, 212 to 215, 292 to 295, and 321 to 323 each bind GTP; these read GFPSAGKS, FTTLV, DVPG, NKAD, and SAV. Residues Ser173 and Thr193 each contribute to the Mg(2+) site. An OCT domain is found at 358 to 438; the sequence is PVISNENSFS…IGNVSFDWEP (81 aa). Residues 462 to 486 form a disordered region; the sequence is RIGATERKHASRIRRGLEGLDPEDQ.

It belongs to the TRAFAC class OBG-HflX-like GTPase superfamily. OBG GTPase family. In terms of assembly, monomer. Mg(2+) is required as a cofactor.

The protein resides in the cytoplasm. In terms of biological role, an essential GTPase which binds GTP, GDP and possibly (p)ppGpp with moderate affinity, with high nucleotide exchange rates and a fairly low GTP hydrolysis rate. Plays a role in control of the cell cycle, stress response, ribosome biogenesis and in those bacteria that undergo differentiation, in morphogenesis control. The protein is GTPase Obg of Rhodococcus jostii (strain RHA1).